Reading from the N-terminus, the 303-residue chain is Eukaryotic translation initiation factor 3 subunit G (303 aa).

The interval 1-38 (MATQTKHDWADDEDLEETTTTTAPTTDLPPPQKIQNKD) is disordered. Positions 223 to 301 (ATLRVTNVSE…LILRVEFAKK (79 aa)) constitute an RRM domain.

The protein belongs to the eIF-3 subunit G family. In terms of assembly, component of the eukaryotic translation initiation factor 3 (eIF-3) complex.

The protein localises to the cytoplasm. RNA-binding component of the eukaryotic translation initiation factor 3 (eIF-3) complex, which is involved in protein synthesis of a specialized repertoire of mRNAs and, together with other initiation factors, stimulates binding of mRNA and methionyl-tRNAi to the 40S ribosome. The eIF-3 complex specifically targets and initiates translation of a subset of mRNAs involved in cell proliferation. This subunit can bind 18S rRNA. This Chaetomium globosum (strain ATCC 6205 / CBS 148.51 / DSM 1962 / NBRC 6347 / NRRL 1970) (Soil fungus) protein is Eukaryotic translation initiation factor 3 subunit G.